The chain runs to 242 residues: Type III pantothenate kinase (242 aa).

7-14 (DLGNSRFK) contacts ATP. Substrate contacts are provided by residues Tyr91 and 98–101 (GVDR). Catalysis depends on Asp100, which acts as the Proton acceptor. Thr121 serves as a coordination point for ATP. A substrate-binding site is contributed by Thr171.

This sequence belongs to the type III pantothenate kinase family. In terms of assembly, homodimer. The cofactor is NH4(+). K(+) serves as cofactor.

Its subcellular location is the cytoplasm. The catalysed reaction is (R)-pantothenate + ATP = (R)-4'-phosphopantothenate + ADP + H(+). It functions in the pathway cofactor biosynthesis; coenzyme A biosynthesis; CoA from (R)-pantothenate: step 1/5. Catalyzes the phosphorylation of pantothenate (Pan), the first step in CoA biosynthesis. The chain is Type III pantothenate kinase from Xylella fastidiosa (strain M23).